Reading from the N-terminus, the 210-residue chain is Somatotropin (210 aa).

An N-terminal signal peptide occupies residues 1 to 23; that stretch reads MARALVLLSVVLVSLLVNQGTAS. Histidine 38 is a binding site for Zn(2+). A disulfide bond links cysteine 71 and cysteine 183. Glutamate 192 contacts Zn(2+). Cysteine 200 and cysteine 208 are disulfide-bonded.

It belongs to the somatotropin/prolactin family.

Its subcellular location is the secreted. Growth hormone plays an important role in growth control. In Ctenopharyngodon idella (Grass carp), this protein is Somatotropin (gh).